The sequence spans 220 residues: ATP-dependent dethiobiotin synthetase BioD (220 aa).

An ATP-binding site is contributed by 13–18; it reads EVGKTV. Thr17 lines the Mg(2+) pocket. The active site involves Lys38. Ser42 contacts substrate. ATP is bound by residues Asp55, 116–119, 176–177, and Asn212; these read EGAG and NR. Mg(2+) is bound by residues Asp55 and Glu116.

The protein belongs to the dethiobiotin synthetase family. As to quaternary structure, homodimer. Mg(2+) serves as cofactor.

It is found in the cytoplasm. It carries out the reaction (7R,8S)-7,8-diammoniononanoate + CO2 + ATP = (4R,5S)-dethiobiotin + ADP + phosphate + 3 H(+). It participates in cofactor biosynthesis; biotin biosynthesis; biotin from 7,8-diaminononanoate: step 1/2. Functionally, catalyzes a mechanistically unusual reaction, the ATP-dependent insertion of CO2 between the N7 and N8 nitrogen atoms of 7,8-diaminopelargonic acid (DAPA, also called 7,8-diammoniononanoate) to form a ureido ring. This chain is ATP-dependent dethiobiotin synthetase BioD, found in Photobacterium profundum (strain SS9).